Reading from the N-terminus, the 326-residue chain is MDIKPEKYKPIKEEYIKSFKDMLLLRRFEEKCGQLYGMGKIGGFCHLYIGQEAVISAVAMIKKKGDSTITSYRDHAHIILAGTEPKYVLAELMGRATGCSKGKGGSMHLFDIPNKFYGGHGIVGAQVPIGTGLAFAEKYNGTNNICFTFLGDGAVNQGQVYEAFNMASLWGLPIVYIIENNEYSMGTSVARSTFMCDLYKKGESFGIRGFQLDGMDFEEMYNGTKQVAEYVRENSFPVILEVKTYRYRGHSMSDPAKYRSKEEVEKYKERDTLVRIREIILDNKYATEADLKAIEQSVREIIKVAVEFSENSPLPAEDELYTEIYV.

In terms of assembly, heterodimer of an alpha and a beta chain. The cofactor is thiamine diphosphate.

The enzyme catalyses N(6)-[(R)-lipoyl]-L-lysyl-[protein] + pyruvate + H(+) = N(6)-[(R)-S(8)-acetyldihydrolipoyl]-L-lysyl-[protein] + CO2. Its function is as follows. The pyruvate dehydrogenase complex catalyzes the overall conversion of pyruvate to acetyl-CoA and CO(2). It contains multiple copies of three enzymatic components: pyruvate dehydrogenase (E1), dihydrolipoamide acetyltransferase (E2) and lipoamide dehydrogenase (E3). The polypeptide is Pyruvate dehydrogenase E1 component subunit alpha (pdhA) (Rickettsia prowazekii (strain Madrid E)).